Here is a 465-residue protein sequence, read N- to C-terminus: 2-methylcitrate synthase, mitochondrial (465 aa).

Residues Arg72 and Lys190 each coordinate CoA. His265 serves as a coordination point for oxaloacetate. Position 300 (Leu300) interacts with CoA. His301 is a catalytic residue. CoA contacts are provided by Val342, Gly344, and Tyr345. Positions 347 and 356 each coordinate oxaloacetate. Residue His347 is part of the active site. CoA is bound by residues Thr394, Lys395, and Asn400. The active site involves Asp402. Arg428 and Arg448 together coordinate oxaloacetate.

This sequence belongs to the citrate synthase family. In terms of assembly, homodimer.

The protein localises to the mitochondrion matrix. The enzyme catalyses propanoyl-CoA + oxaloacetate + H2O = (2S,3S)-2-methylcitrate + CoA + H(+). The catalysed reaction is oxaloacetate + acetyl-CoA + H2O = citrate + CoA + H(+). The protein operates within organic acid metabolism; propanoate degradation. Activity is inhibited by p-chloromercuribenzoate (pCMB), monoiodoacetamide, H(2)O(2), ATP, ADP, NADH, NADPH, Hg(2+) and Zn(2+). Component of the methylcitrate cycle that catalyzes the synthesis of (2S,3S)-2-methylcitrate from propionyl-CoA and oxaloacetate. Plays an important role in detoxification of propionyl-CoA, an inhibitor of both primary and secondary metabolism. Also has citrate synthase activity using as substrates acetyl-CoA and oxaloacetate. The sequence is that of 2-methylcitrate synthase, mitochondrial from Yarrowia lipolytica (strain CLIB 122 / E 150) (Yeast).